Consider the following 643-residue polypeptide: E3 ubiquitin-protein ligase AMFR (643 aa).

Transmembrane regions (helical) follow at residues 82–102, 122–142, 186–206, 215–235, 254–274, and 276–296; these read LFVW…AKLI, FWNF…VQTV, VLSL…VCCV, TLAF…HVIL, GTYV…LDLM, and HIHM…VIFM. The RING-type zinc finger occupies 341–379; it reads CAICWDSMQAARKLPCGHLFHNSCLRSWLEQDTSCPTCR. Residues 429 to 449 traverse the membrane as a helical segment; that stretch reads IASWLPSFSVEVMHTTNILGI. One can recognise a CUE domain in the interval 456 to 498; the sequence is QLNAMAHQIQEMFPQVPYHLVLQDLQMTRSVEITTDNILEGRI. A disordered region spans residues 504–535; it reads TQRSDSLRPALNSPVERPSPDLEEGEASVQTE. Phosphoserine is present on residues Ser-516 and Ser-542. The tract at residues 598–624 is disordered; the sequence is LNKSSEDDGASERLLPSEGTSSDPVTL. Positions 622–640 are VCP/p97-interacting motif (VIM); it reads VTLRRRMLAAAAERRLQRQ.

In terms of assembly, interacts with RNF5. Also forms an ERAD complex containing VCP/p97, NGLY1; PSMC1; SAKS1 and RAD23B required for coupling retrotranslocation, ubiquitination and deglycosylation. Interacts with DERL1. Interacts (through a region distinct from the RING finger) with UBE2G2/UBC7. Component of the VCP/p97-AMFR/gp78 complex that enhances VCP/p97 binding to polyubiquitinated proteins for their degradation by the endoplasmic reticulum-associated degradation (ERAD) pathway. Interacts (via the VIM) with VCP/p97. Interacts (via its membrane domain) with INSIG1; the interaction initiates the sterol-mediated ubiquitination and degradation of HMGCR by the ERAD pathway. Interacts with AUP1, UBE2G2 and RNF139/TRC8; interaction with AUP1 facilitates interaction of AMFR with ubiquitin-conjugating enzyme UBE2G2 and ubiquitin ligase RNF139, leading to sterol-induced ubiquitination of HNGCR and its subsequent proteasomal degradation. Interacts with BAG6. Interacts with USP13 (via UBA 2 domain); the interaction is direct. Interacts with LMBR1L, UBAC2 and CTNNB1. Interacts with C18orf32. Palmitoylation of the RING-type zing finger by ZDHHC6 promotes localization to the peripheral endoplasmic reticulum. Expressed in heart, brain, liver, lung, skeletal muscle, kidney and testis. Not detected in spleen.

The protein resides in the endoplasmic reticulum membrane. It catalyses the reaction [E2 ubiquitin-conjugating enzyme]-S-ubiquitinyl-L-cysteine + [acceptor protein]-L-cysteine = [E2 ubiquitin-conjugating enzyme]-L-cysteine + [acceptor protein]-S-ubiquitinyl-L-cysteine.. It functions in the pathway protein modification; protein ubiquitination. Functionally, E3 ubiquitin-protein ligase that mediates the polyubiquitination of lysine and cysteine residues on target proteins, such as CD3D, CYP3A4, CFTR, INSIG1, SOAT2/ACAT2 and APOB for proteasomal degradation. Component of a VCP/p97-AMFR/gp78 complex that participates in the final step of endoplasmic reticulum-associated degradation (ERAD). The VCP/p97-AMFR/gp78 complex is involved in the sterol-accelerated ERAD degradation of HMGCR through binding to the HMGCR-INSIG1 complex at the ER membrane. In addition, interaction of AMFR with AUP1 facilitates interaction of AMFR with ubiquitin-conjugating enzyme UBE2G2 and ubiquitin ligase RNF139, leading to sterol-induced HMGCR ubiquitination. The ubiquitinated HMGCR is then released from the ER by the complex into the cytosol for subsequent destruction. In addition to ubiquitination on lysine residues, catalyzes ubiquitination on cysteine residues: together with INSIG1, mediates polyubiquitination of SOAT2/ACAT2 at 'Cys-277', leading to its degradation when the lipid levels are low. Catalyzes ubiquitination and subsequent degradation of INSIG1 when cells are depleted of sterols. Mediates polyubiquitination of INSIG2 at 'Cys-215' in some tissues, leading to its degradation. Also regulates ERAD through the ubiquitination of UBL4A a component of the BAG6/BAT3 complex. Also acts as a scaffold protein to assemble a complex that couples ubiquitination, retranslocation and deglycosylation. Mediates tumor invasion and metastasis as a receptor for the GPI/autocrine motility factor. In association with LMBR1L and UBAC2, negatively regulates the canonical Wnt signaling pathway in the lymphocytes by promoting the ubiquitin-mediated degradation of CTNNB1 and Wnt receptors FZD6 and LRP6. Regulates NF-kappa-B and MAPK signaling pathways by mediating 'Lys-27'-linked polyubiquitination of TAB3 and promoting subsequent TAK1/MAP3K7 activation. The chain is E3 ubiquitin-protein ligase AMFR (Amfr) from Mus musculus (Mouse).